A 167-amino-acid polypeptide reads, in one-letter code: SDFKNKLVISDFKYHCTFILGKDKVIKSVNVFELILFGIYKLSIFIPLFLIFIRLLATNILNFLFEVFKSIYSILKILFVVRFKPIRTHFLRPLSVSFIMISNNILLLISSLWYWLRVGKNLLLSTVGDGVGRFCKFRLPKPLLIDLVWNFLLFCFLCDRNFFIEFI.

It is found in the mitochondrion. This is an uncharacterized protein from Ascobolus immersus.